Consider the following 171-residue polypeptide: 3-hydroxydecanoyl-[acyl-carrier-protein] dehydratase (171 aa).

His-70 is a catalytic residue.

This sequence belongs to the thioester dehydratase family. FabA subfamily. In terms of assembly, homodimer.

It localises to the cytoplasm. It carries out the reaction a (3R)-hydroxyacyl-[ACP] = a (2E)-enoyl-[ACP] + H2O. It catalyses the reaction (3R)-hydroxydecanoyl-[ACP] = (2E)-decenoyl-[ACP] + H2O. The enzyme catalyses (2E)-decenoyl-[ACP] = (3Z)-decenoyl-[ACP]. The protein operates within lipid metabolism; fatty acid biosynthesis. In terms of biological role, necessary for the introduction of cis unsaturation into fatty acids. Catalyzes the dehydration of (3R)-3-hydroxydecanoyl-ACP to E-(2)-decenoyl-ACP and then its isomerization to Z-(3)-decenoyl-ACP. Can catalyze the dehydratase reaction for beta-hydroxyacyl-ACPs with saturated chain lengths up to 16:0, being most active on intermediate chain length. This Stenotrophomonas maltophilia (strain K279a) protein is 3-hydroxydecanoyl-[acyl-carrier-protein] dehydratase.